Here is a 156-residue protein sequence, read N- to C-terminus: ATP synthase subunit b (156 aa).

Residues 5–25 traverse the membrane as a helical segment; the sequence is LTLIGQAIAFAFFVAFCMKFV.

Belongs to the ATPase B chain family. As to quaternary structure, F-type ATPases have 2 components, F(1) - the catalytic core - and F(0) - the membrane proton channel. F(1) has five subunits: alpha(3), beta(3), gamma(1), delta(1), epsilon(1). F(0) has three main subunits: a(1), b(2) and c(10-14). The alpha and beta chains form an alternating ring which encloses part of the gamma chain. F(1) is attached to F(0) by a central stalk formed by the gamma and epsilon chains, while a peripheral stalk is formed by the delta and b chains.

It localises to the cell inner membrane. Functionally, f(1)F(0) ATP synthase produces ATP from ADP in the presence of a proton or sodium gradient. F-type ATPases consist of two structural domains, F(1) containing the extramembraneous catalytic core and F(0) containing the membrane proton channel, linked together by a central stalk and a peripheral stalk. During catalysis, ATP synthesis in the catalytic domain of F(1) is coupled via a rotary mechanism of the central stalk subunits to proton translocation. In terms of biological role, component of the F(0) channel, it forms part of the peripheral stalk, linking F(1) to F(0). This chain is ATP synthase subunit b, found in Acinetobacter baumannii (strain AYE).